The following is a 427-amino-acid chain: Trigger factor (427 aa).

Positions 163–248 (GDTAVIDFEG…VHEIKAKELP (86 aa)) constitute a PPIase FKBP-type domain.

Belongs to the FKBP-type PPIase family. Tig subfamily.

It is found in the cytoplasm. It catalyses the reaction [protein]-peptidylproline (omega=180) = [protein]-peptidylproline (omega=0). Involved in protein export. Acts as a chaperone by maintaining the newly synthesized protein in an open conformation. Functions as a peptidyl-prolyl cis-trans isomerase. The polypeptide is Trigger factor (Bacillus cytotoxicus (strain DSM 22905 / CIP 110041 / 391-98 / NVH 391-98)).